The following is a 584-amino-acid chain: Transcription factor COE1 (584 aa).

M1 is subject to N-acetylmethionine. The segment covering 1-14 (MFGIQESIQRSGSS) has biased composition (polar residues). Residues 1–21 (MFGIQESIQRSGSSMKEEPLG) form a disordered region. A Glycyl lysine isopeptide (Lys-Gly) (interchain with G-Cter in SUMO1); alternate cross-link involves residue K16. K16 participates in a covalent cross-link: Glycyl lysine isopeptide (Lys-Gly) (interchain with G-Cter in SUMO2); alternate. Residues 63-66 (RKSN) form an interaction with DNA region. Residues 151–170 (CRVLLTHEIMCSRCCDKKSC) form a C5-type zinc finger. Interaction with DNA stretches follow at residues 197-204 (NCLKNAGN) and 236-239 (NNSK). Residues 255–338 (PCIKAISPSE…KGTPGRFIYT (84 aa)) form the IPT/TIG domain. The segment at 450-473 (GFTRNSSSVSPHGYVPSTTPQQTN) is disordered.

Belongs to the COE family. Homodimer. Interacts with ZNF423 and ZNF521, leading to prevent EBF1 to bind DNA and activate target genes. Interacts with CCR4-NOT component CNOT3. Expressed exclusively in olfactory receptor neurons and their precursors.

The protein localises to the nucleus. In terms of biological role, key pioneer transcription factor of B-cell specification and commitment. Recognizes variations of the palindromic sequence 5'-ATTCCCNNGGGAATT-3'. Operates in a transcription factor network to activate B-cell-specific genes and repress genes associated with alternative cell fates. For instance, positively regulates many B-cell specific genes including BCR or CD40 while repressing genes that direct cells into alternative lineages, including GATA3 and TCF7 for the T-cell lineage. In addition to its role during lymphopoiesis, controls the thermogenic gene program in adipocytes during development and in response to environmental cold. The chain is Transcription factor COE1 (Ebf1) from Rattus norvegicus (Rat).